Here is a 157-residue protein sequence, read N- to C-terminus: Putative dehydration-responsive element-binding protein 2H (157 aa).

Residues 5-21 carry the Nuclear localization signal motif; it reads RKSRGTRDVAEILRKWR. Positions 29–57 are disordered; that stretch reads ADSCIDGGGSKPIRKAPPKRSRKGCMKGK. Positions 40–54 are enriched in basic residues; sequence PIRKAPPKRSRKGCM. Positions 66–123 form a DNA-binding region, AP2/ERF; sequence DYTGVRQRTWGKWVAEIREPGRGAKLWLGTFSSSYEAALAYDEASKAIYGQSARLNLP.

It belongs to the AP2/ERF transcription factor family. ERF subfamily.

The protein localises to the nucleus. Its function is as follows. Putative transcriptional activator that binds specifically to the DNA sequence 5'-[AG]CCGAC-3'. The sequence is that of Putative dehydration-responsive element-binding protein 2H (DREB2H) from Arabidopsis thaliana (Mouse-ear cress).